The chain runs to 394 residues: Phosphoglycerate kinase (394 aa).

Substrate is bound by residues 21–23 (DFN), Arg-36, 59–62 (HLGR), Arg-118, and Arg-151. Ser-183 is modified (phosphoserine). Positions 201 and 292 each coordinate ATP. Residue Thr-299 is modified to Phosphothreonine. ATP is bound by residues Glu-323 and 350-353 (GGDS).

Belongs to the phosphoglycerate kinase family. In terms of assembly, monomer.

The protein resides in the cytoplasm. The catalysed reaction is (2R)-3-phosphoglycerate + ATP = (2R)-3-phospho-glyceroyl phosphate + ADP. The protein operates within carbohydrate degradation; glycolysis; pyruvate from D-glyceraldehyde 3-phosphate: step 2/5. This is Phosphoglycerate kinase from Bacillus mycoides (strain KBAB4) (Bacillus weihenstephanensis).